We begin with the raw amino-acid sequence, 375 residues long: Circadian-associated transcriptional repressor (375 aa).

Residues M1–S32 show a composition bias toward low complexity. Disordered stretches follow at residues M1 to Q102, K192 to P218, and D351 to P375. A compositionally biased stretch (basic and acidic residues) spans D33–P46.

Interacts with BMAL1, PER2, CRY2, BHLHE41, HDAC1 NR3C1.

The protein localises to the nucleus. The protein resides in the PML body. Functionally, transcriptional repressor which forms a negative regulatory component of the circadian clock and acts independently of the circadian transcriptional repressors: CRY1, CRY2 and BHLHE41. In a histone deacetylase-dependent manner represses the transcriptional activator activity of the CLOCK-BMAL1 heterodimer. Abrogates the interaction of BMAL1 with the transcriptional coactivator CREBBP and can repress the histone acetyl-transferase activity of the CLOCK-BMAL1 heterodimer, reducing histone acetylation of its target genes. Rhythmically binds the E-box elements (5'-CACGTG-3') on circadian gene promoters and its occupancy shows circadian oscillation antiphasic to BMAL1. Interacts with the glucocorticoid receptor (NR3C1) and contributes to the repressive function in the glucocorticoid response. The polypeptide is Circadian-associated transcriptional repressor (Ciart) (Mus musculus (Mouse)).